A 74-amino-acid polypeptide reads, in one-letter code: ATP synthase subunit 9, mitochondrial (74 aa).

Helical transmembrane passes span 16–36 (GLIG…LGVA) and 50–70 (ILGF…AFLL).

The protein belongs to the ATPase C chain family. In terms of assembly, F-type ATPases have 2 components, CF(1) - the catalytic core - and CF(0) - the membrane proton channel. CF(1) has five subunits: alpha(3), beta(3), gamma(1), delta(1), epsilon(1). CF(0) has three main subunits: a, b and c.

Its subcellular location is the mitochondrion membrane. Mitochondrial membrane ATP synthase (F(1)F(0) ATP synthase or Complex V) produces ATP from ADP in the presence of a proton gradient across the membrane which is generated by electron transport complexes of the respiratory chain. F-type ATPases consist of two structural domains, F(1) - containing the extramembraneous catalytic core and F(0) - containing the membrane proton channel, linked together by a central stalk and a peripheral stalk. During catalysis, ATP synthesis in the catalytic domain of F(1) is coupled via a rotary mechanism of the central stalk subunits to proton translocation. Part of the complex F(0) domain. A homomeric c-ring of probably 10 subunits is part of the complex rotary element. The protein is ATP synthase subunit 9, mitochondrial (ATP9) of Trichophyton rubrum (Athlete's foot fungus).